The sequence spans 361 residues: Cobalt-precorrin-5B C(1)-methyltransferase (361 aa).

Belongs to the CbiD family.

The catalysed reaction is Co-precorrin-5B + S-adenosyl-L-methionine = Co-precorrin-6A + S-adenosyl-L-homocysteine. The protein operates within cofactor biosynthesis; adenosylcobalamin biosynthesis; cob(II)yrinate a,c-diamide from sirohydrochlorin (anaerobic route): step 6/10. In terms of biological role, catalyzes the methylation of C-1 in cobalt-precorrin-5B to form cobalt-precorrin-6A. This Methylorubrum extorquens (strain CM4 / NCIMB 13688) (Methylobacterium extorquens) protein is Cobalt-precorrin-5B C(1)-methyltransferase.